The primary structure comprises 484 residues: MATLDTASDTASPPRAPVVRRSALGCTKVRDSCQSCATSKIKCPKEKTSCSKCQARGIECQYFFARRPGRRRENSTGHPTSCTSTSTTANSSSSSSRSSNSSSSSSTSPPSSSSSLSSNPEPTSDKDLPRPRSGDGAAANSTEPSILPPANNSVLDITPTDNVLGPYSSDLFSVLEDPSVFAPLPDFDSNMTDVDFSTMDYFEQPVMDGDNFTRALSDIGSLLIPETISFDLGALESDPLSASAVPSLASSVPTPSTAHSVTMMRGLSASISCRCVSQALDLLKALSAKSAPVSPFSGPGAASMTTMSSVQALMGENQQYIDNVSNLLSCSSCTEDTFLLAIVSMIVLKILERYASAARAQVGGGESDTGQRPATSMIPNGKDQMRPLGRIYSTGGRDSARSVLSELHRVQKLVNLLSPKLKKRQEADTRAFAHVAWGRHTVSNENDKALSTLLSPDTLAQMEGDMRKSLSSLSANIINRLRQD.

The segment at residues 33–60 is a DNA-binding region (zn(2)-C6 fungal-type); the sequence is CQSCATSKIKCPKEKTSCSKCQARGIEC. Disordered stretches follow at residues 70–154 and 363–387; these read RRRE…NNSV and GGGESDTGQRPATSMIPNGKDQMRP. A compositionally biased stretch (low complexity) spans 76 to 122; it reads TGHPTSCTSTSTTANSSSSSSRSSNSSSSSSTSPPSSSSSLSSNPEP. The segment covering 123 to 133 has biased composition (basic and acidic residues); the sequence is TSDKDLPRPRS. Polar residues-rich tracts occupy residues 139 to 154 and 368 to 378; these read ANSTEPSILPPANNSV and DTGQRPATSMI.

It localises to the nucleus. Transcription factor that probably regulates the expression of the gene cluster that mediates the biosynthesis of notoamide, a fungal indole alkaloid that belongs to a family of natural products containing a characteristic bicyclo[2.2.2]diazaoctane core. The protein is Notoamide biosynthesis transcriptional activator notL of Aspergillus sp. (strain MF297-2).